Reading from the N-terminus, the 1457-residue chain is ABC transporter G family member 36 (1457 aa).

Residues 14 to 43 (RLGGSMRGDSGSMWRRGDDVFSRSSREEDD) are disordered. The span at 28–39 (RRGDDVFSRSSR) shows a compositional bias: basic and acidic residues. Residues 164-437 (GNALGILPNR…FESTGFKCPD (274 aa)) form the ABC transporter 1 domain. 197–204 (GPPGSGKT) contributes to the ATP binding site. An ABC transmembrane type-2 1 domain is found at 515–728 (ELLKANIDRE…AQNAISVNEL (214 aa)). 7 helical membrane-spanning segments follow: residues 533–553 (FVYMFRTFQLMVVSLIAMTLF), 565–585 (SGGIYMGALFFGVLMIMFNGF), 621–641 (IPITFIEVGGYVFLTYYVIGF), 653–673 (LLMLAINQMAGSLFRFIGGAA), 677–697 (IVANVFASFMLLIFMVLGGFI), 706–726 (WWIWGYWISPMMYAQNAISVN), and 765–785 (IGFGAMIGFTILFNALFTLAL). Positions 821–841 (SSGSTRRPMGNGTENDSTIVD) are disordered. The 253-residue stretch at 860-1112 (LSFDNVRYSV…ELIKYFESIP (253 aa)) folds into the ABC transporter 2 domain. ATP is bound at residue 905 to 912 (GVSGAGKT). An ABC transmembrane type-2 2 domain is found at 1185 to 1399 (TQCMACLWKQ…TLYGLVVSQF (215 aa)). 7 helical membrane-spanning segments follow: residues 1209–1229 (FFFTTVIALLFGTIFWDLGGK), 1244–1264 (YAAVLFIGVMNCTSVQPVVAV), 1292–1312 (IPYTLVQATVYGIIVYAMIGF), 1319–1339 (FFWYLFFMVFTLLYFTFYGMM), 1349–1369 (IASIVSSAFYAIWNLFSGFVI), 1380–1400 (WYCWACPVAWTLYGLVVSQFG), and 1429–1449 (WVATVVAAFAFLFASLFGFAI).

Belongs to the ABC transporter superfamily. ABCG family. PDR (TC 3.A.1.205) subfamily.

The protein localises to the membrane. Its function is as follows. May be a general defense protein. The chain is ABC transporter G family member 36 from Oryza sativa subsp. indica (Rice).